A 140-amino-acid chain; its full sequence is Large ribosomal subunit protein bL17 (140 aa).

Residues 121–140 (AAKGLDSGPTAEANDDDSEE) form a disordered region.

This sequence belongs to the bacterial ribosomal protein bL17 family. In terms of assembly, part of the 50S ribosomal subunit. Contacts protein L32.

This is Large ribosomal subunit protein bL17 from Rhodospirillum rubrum (strain ATCC 11170 / ATH 1.1.1 / DSM 467 / LMG 4362 / NCIMB 8255 / S1).